We begin with the raw amino-acid sequence, 108 residues long: ATP synthase peripheral stalk subunit F6, mitochondrial (108 aa).

Residues 1–32 constitute a mitochondrion transit peptide; that stretch reads MILQRLFRFSSIIRSAVSVHFRRNIGVTAVAF. N6-acetyllysine occurs at positions 41, 46, and 79. Lys-84, Lys-94, and Lys-99 each carry N6-acetyllysine; alternate. An N6-succinyllysine; alternate mark is found at Lys-84, Lys-94, and Lys-99. Lys-105 bears the N6-acetyllysine mark.

Belongs to the eukaryotic ATPase subunit F6 family. As to quaternary structure, component of the ATP synthase complex composed at least of ATP5F1A/subunit alpha, ATP5F1B/subunit beta, ATP5MC1/subunit c (homooctomer), MT-ATP6/subunit a, MT-ATP8/subunit 8, ATP5ME/subunit e, ATP5MF/subunit f, ATP5MG/subunit g, ATP5MK/subunit k, ATP5MJ/subunit j, ATP5F1C/subunit gamma, ATP5F1D/subunit delta, ATP5F1E/subunit epsilon, ATP5PF/subunit F6, ATP5PB/subunit b, ATP5PD/subunit d, ATP5PO/subunit OSCP. ATP synthase complex consists of a soluble F(1) head domain (subunits alpha(3) and beta(3)) - the catalytic core - and a membrane F(0) domain - the membrane proton channel (subunits c, a, 8, e, f, g, k and j). These two domains are linked by a central stalk (subunits gamma, delta, and epsilon) rotating inside the F1 region and a stationary peripheral stalk (subunits F6, b, d, and OSCP).

It is found in the mitochondrion. Its subcellular location is the mitochondrion inner membrane. Functionally, subunit F6, of the mitochondrial membrane ATP synthase complex (F(1)F(0) ATP synthase or Complex V) that produces ATP from ADP in the presence of a proton gradient across the membrane which is generated by electron transport complexes of the respiratory chain. ATP synthase complex consist of a soluble F(1) head domain - the catalytic core - and a membrane F(1) domain - the membrane proton channel. These two domains are linked by a central stalk rotating inside the F(1) region and a stationary peripheral stalk. During catalysis, ATP synthesis in the catalytic domain of F(1) is coupled via a rotary mechanism of the central stalk subunits to proton translocation. In vivo, can only synthesize ATP although its ATP hydrolase activity can be activated artificially in vitro. Part of the complex F(0) domain. Part of the complex F(0) domain and the peripheric stalk, which acts as a stator to hold the catalytic alpha(3)beta(3) subcomplex and subunit a/ATP6 static relative to the rotary elements. The polypeptide is ATP synthase peripheral stalk subunit F6, mitochondrial (Macaca fascicularis (Crab-eating macaque)).